The chain runs to 451 residues: Golgi reassembly-stacking protein 2 (451 aa).

Glycine 2 carries N-myristoyl glycine lipidation. 2 PDZ GRASP-type domains span residues 15–105 and 111–199; these read EGYH…FCSF and NVWH…YGYL. The interval 15 to 215 is GRASP; it reads EGYHVLRVQE…PFEEGKKISL (201 aa). Dimethylated arginine is present on residues arginine 30 and arginine 47. Residues 194 to 199 form an important for membrane binding region; that stretch reads IGYGYL. The residue at position 214 (serine 214) is a Phosphoserine. Threonine 222 is modified (phosphothreonine). A Phosphothreonine; by MAPK modification is found at threonine 225. Residues 236-252 show a composition bias toward low complexity; it reads LSSVSPPSLSPPGTTGV. Disordered stretches follow at residues 236–255 and 377–451; these read LSSVSPPSLSPPGTTGVEQS and EGSS…SEPS. The span at 410–424 shows a compositional bias: polar residues; the sequence is SSLTVDVTSPASKVP. Phosphoserine is present on serine 411. Phosphothreonine occurs at positions 417 and 435. Phosphoserine occurs at positions 443 and 448.

This sequence belongs to the GORASP family. In terms of assembly, homodimer. Homooligomer. ER stress induces phosphorylation-dependent monomerization. Interacts with BLZF1/Golgin 45. Identified in a complex with RAB2 and GORASP2. Interacts with JAM2 and JAM3. Interacts with members of the p24 cargo receptors. Interacts with CNIH and the cytoplasmic domain of transmembrane TGFA, prior its transit in the trans-Golgi. Interacts with KCTD5. Interacts with TMED2 and TMED3. Interacts with SEC16A in response to ER stress. Interacts (via PDZ GRASP-type 1 domain) with core-glycosylated CFTR in response to ER stress. In terms of processing, myristoylated. Myristoylation is essential for the Golgi targeting. Palmitoylated. Post-translationally, phosphorylated in mitotic cells. ER stress-induced phosphorylation at Ser-443 induces monomerization and subsequent relocalization from Golgi to ER which is essential for mediating unconventional (ER/Golgi-independent) trafficking of CFTR to the cell membrane. Detected in lung, heart and testis. Colocalized in a polarized fashion in the acrosome region with JAM3 in round spermatids (at protein level).

It is found in the golgi apparatus membrane. It localises to the endoplasmic reticulum membrane. Its subcellular location is the golgi apparatus. Functionally, key structural protein of the Golgi apparatus. The membrane cisternae of the Golgi apparatus adhere to each other to form stacks, which are aligned side by side to form the Golgi ribbon. Acting in concert with GORASP1/GRASP65, is required for the formation and maintenance of the Golgi ribbon, and may be dispensable for the formation of stacks. However, other studies suggest that GORASP2 plays a role in assembly and membrane stacking of the Golgi cisternae, and in the process by which Golgi stacks reform after breakdown during mitosis and meiosis. May regulate the intracellular transport and presentation of a defined set of transmembrane proteins, such as transmembrane TGFA. Required for normal acrosome formation during spermiogenesis and normal male fertility, probably by promoting colocalization of JAM2 and JAM3 at contact sites between germ cells and Sertoli cells. Mediates ER stress-induced unconventional (ER/Golgi-independent) trafficking of core-glycosylated CFTR to cell membrane. The polypeptide is Golgi reassembly-stacking protein 2 (Gorasp2) (Mus musculus (Mouse)).